The following is a 566-amino-acid chain: Developmental regulatory protein wetA (566 aa).

Disordered stretches follow at residues 116–174, 232–316, 334–364, 381–400, and 429–542; these read VPAV…LMRP, STEG…SDSL, AWWP…SIQS, SSFD…VTSA, and PPVQ…RRRK. Polar residues-rich tracts occupy residues 165-174 and 269-291; these read QSFSPSLMRP and AQQQ…SSPP. Low complexity predominate over residues 298–316; the sequence is SSPHSSDPQSLSSWHSDSL. Polar residues-rich tracts occupy residues 347–364 and 381–398; these read PSYQ…SIQS and SSFD…SVVT. The segment covering 435–448 has biased composition (low complexity); the sequence is SRSPSLSPRGRGSP. The segment covering 449–462 has biased composition (polar residues); sequence TQGSPLRNEASTKT. Positions 463-473 are enriched in basic residues; that stretch reads SPHRRGYHGRK. The span at 482-500 shows a compositional bias: low complexity; that stretch reads PKPVKGPNSSSPGSGSNKS. The span at 501 to 511 shows a compositional bias: polar residues; the sequence is LTVSFVNFTPN.

The protein belongs to the wetA family.

Its function is as follows. BrlA, abaA and wetA are pivotal regulators of conidiophore development and conidium maturation. They act individually and together to regulate their own expression and that of numerous other sporulation-specific genes. Plays an essential role in the completion of conidial maturation and is essential for trehalose biogenesis in conidia. Negatively regulates expression of the melanin biosynthetic gene cluster. Also plays an a role in the early phase of fungal growth including proper hyphal branching. This is Developmental regulatory protein wetA from Aspergillus fumigatus (strain ATCC MYA-4609 / CBS 101355 / FGSC A1100 / Af293) (Neosartorya fumigata).